A 180-amino-acid chain; its full sequence is ATP-dependent protease subunit HslV (180 aa).

The active site involves T2. Na(+)-binding residues include G158, C161, and T164.

Belongs to the peptidase T1B family. HslV subfamily. In terms of assembly, a double ring-shaped homohexamer of HslV is capped on each side by a ring-shaped HslU homohexamer. The assembly of the HslU/HslV complex is dependent on binding of ATP.

It is found in the cytoplasm. It carries out the reaction ATP-dependent cleavage of peptide bonds with broad specificity.. Allosterically activated by HslU binding. In terms of biological role, protease subunit of a proteasome-like degradation complex believed to be a general protein degrading machinery. The chain is ATP-dependent protease subunit HslV from Baumannia cicadellinicola subsp. Homalodisca coagulata.